Reading from the N-terminus, the 483-residue chain is Regulatory protein ViaA (483 aa).

The protein belongs to the ViaA family. Homodimer. Interacts with RavA.

It localises to the cytoplasm. Component of the RavA-ViaA chaperone complex, which may act on the membrane to optimize the function of some of the respiratory chains. ViaA stimulates the ATPase activity of RavA. The sequence is that of Regulatory protein ViaA from Shigella dysenteriae serotype 1 (strain Sd197).